The primary structure comprises 334 residues: RNA ligase 2 (334 aa).

The tract at residues 1–234 (MFKKYSSLEN…KCKNSKFSEK (234 aa)) is adenylyltransferase. Positions 34, 35, 36, 40, 55, and 99 each coordinate AMP. The N6-AMP-lysine intermediate role is filled by lysine 35. Mg(2+) contacts are provided by isoleucine 162, leucine 164, asparagine 166, glutamate 204, and tyrosine 206. AMP-binding residues include lysine 225 and lysine 227.

Belongs to the RNA ligase 2 family. Mg(2+) serves as cofactor. The cofactor is Mn(2+).

The catalysed reaction is ATP + (ribonucleotide)n-3'-hydroxyl + 5'-phospho-(ribonucleotide)m = (ribonucleotide)n+m + AMP + diphosphate.. Repairs 3'-OH/5'-PO4 nicks in duplex RNA or RNA:DNA hybrid in which the broken 3'-OH strand is RNA. The nick ligation reaction entails three nucleotidyl transfer steps. In the first step, the RNA ligase reacts with ATP in the absence of nucleic acid to form a covalent ligase-AMP intermediate and release pyrophosphate. In step 2, the ligase-AMP binds to the nicked duplex nucleic acid and transfers the adenylate to the 5'-PO4 terminus to form an adenylylated nicked intermediate. In step 3, the RNA ligase directs the attack of the nick 3'-OH on the 5'-phosphoanhydride linkage, resulting in a repaired 3' - 5' phosphodiester and release of AMP. The sequence is that of RNA ligase 2 (Y10A) from Enterobacteria phage T4 (Bacteriophage T4).